Consider the following 585-residue polypeptide: Bifunctional lycopene cyclase/phytoene synthase (585 aa).

The lycopene beta-cyclase stretch occupies residues 1–243 (MGFDYAIVHV…IVFGQLAFDN (243 aa)). 7 helical membrane passes run 3–23 (FDYA…LTLL), 35–55 (KVLF…SYLI), 75–97 (IPLE…YLIL), 123–141 (LAGQ…LRVH), 151–171 (LIVV…YQFI), 173–193 (GLPW…LWLV), and 221–241 (IEEA…QLAF). Residues 250–585 (TFPALFPKPP…AWRTLNKSIA (336 aa)) form a phytoene synthase region.

It in the N-terminal section; belongs to the lycopene beta-cyclase family. This sequence in the C-terminal section; belongs to the phytoene/squalene synthase family.

It is found in the membrane. The catalysed reaction is all-trans-lycopene = gamma-carotene. It carries out the reaction gamma-carotene = all-trans-beta-carotene. The enzyme catalyses 2 (2E,6E,10E)-geranylgeranyl diphosphate = 15-cis-phytoene + 2 diphosphate. It participates in carotenoid biosynthesis; beta-carotene biosynthesis. Its pathway is carotenoid biosynthesis; phytoene biosynthesis; all-trans-phytoene from geranylgeranyl diphosphate: step 1/1. In terms of biological role, bifunctional enzyme that catalyzes the reactions from geranylgeranyl diphosphate to phytoene (phytoene synthase) and lycopene to beta-carotene via the intermediate gamma-carotene (lycopene cyclase). The chain is Bifunctional lycopene cyclase/phytoene synthase from Phaeosphaeria nodorum (strain SN15 / ATCC MYA-4574 / FGSC 10173) (Glume blotch fungus).